Here is a 372-residue protein sequence, read N- to C-terminus: Queuine tRNA-ribosyltransferase (372 aa).

The active-site Proton acceptor is D93. Substrate-binding positions include 93–97 (DSGGF), D147, Q190, and G217. Residues 248-254 (GVGSPDC) form an RNA binding region. D267 (nucleophile) is an active-site residue. Residues 272 to 276 (TRMAR) are RNA binding; important for wobble base 34 recognition. Zn(2+)-binding residues include C305, C307, C310, and H336.

The protein belongs to the queuine tRNA-ribosyltransferase family. As to quaternary structure, homodimer. Within each dimer, one monomer is responsible for RNA recognition and catalysis, while the other monomer binds to the replacement base PreQ1. It depends on Zn(2+) as a cofactor.

It catalyses the reaction 7-aminomethyl-7-carbaguanine + guanosine(34) in tRNA = 7-aminomethyl-7-carbaguanosine(34) in tRNA + guanine. It functions in the pathway tRNA modification; tRNA-queuosine biosynthesis. Its function is as follows. Catalyzes the base-exchange of a guanine (G) residue with the queuine precursor 7-aminomethyl-7-deazaguanine (PreQ1) at position 34 (anticodon wobble position) in tRNAs with GU(N) anticodons (tRNA-Asp, -Asn, -His and -Tyr). Catalysis occurs through a double-displacement mechanism. The nucleophile active site attacks the C1' of nucleotide 34 to detach the guanine base from the RNA, forming a covalent enzyme-RNA intermediate. The proton acceptor active site deprotonates the incoming PreQ1, allowing a nucleophilic attack on the C1' of the ribose to form the product. After dissociation, two additional enzymatic reactions on the tRNA convert PreQ1 to queuine (Q), resulting in the hypermodified nucleoside queuosine (7-(((4,5-cis-dihydroxy-2-cyclopenten-1-yl)amino)methyl)-7-deazaguanosine). This is Queuine tRNA-ribosyltransferase from Desulforudis audaxviator (strain MP104C).